Here is a 133-residue protein sequence, read N- to C-terminus: Large ribosomal subunit protein eL32z (133 aa).

The protein belongs to the eukaryotic ribosomal protein eL32 family.

This is Large ribosomal subunit protein eL32z (RPL32A) from Arabidopsis thaliana (Mouse-ear cress).